Here is a 21-residue protein sequence, read N- to C-terminus: Hemocyanin subunit 6 (21 aa).

Belongs to the tyrosinase family. Hemocyanin subfamily. As to expression, hemolymph.

The protein localises to the secreted. It localises to the extracellular space. Its function is as follows. Hemocyanins are copper-containing oxygen carriers occurring freely dissolved in the hemolymph of many mollusks and arthropods. The protein is Hemocyanin subunit 6 of Maja squinado (Mediterranean spider crab).